The following is a 398-amino-acid chain: Serpin-Z2A (398 aa).

The RCL stretch occupies residues 343-367; it reads GTEAAAATIAKAVLLSASPPSDMDF.

Belongs to the serpin family.

Functionally, inhibits chymotrypsin and cathepsin G in vitro. The protein is Serpin-Z2A of Triticum aestivum (Wheat).